Consider the following 119-residue polypeptide: Large ribosomal subunit protein bL20 (119 aa).

Belongs to the bacterial ribosomal protein bL20 family.

In terms of biological role, binds directly to 23S ribosomal RNA and is necessary for the in vitro assembly process of the 50S ribosomal subunit. It is not involved in the protein synthesizing functions of that subunit. This Clostridium novyi (strain NT) protein is Large ribosomal subunit protein bL20.